A 745-amino-acid chain; its full sequence is 1,4-alpha-glucan branching enzyme GlgB (745 aa).

The active-site Nucleophile is the D416. The active-site Proton donor is E469.

The protein belongs to the glycosyl hydrolase 13 family. GlgB subfamily. In terms of assembly, monomer.

It carries out the reaction Transfers a segment of a (1-&gt;4)-alpha-D-glucan chain to a primary hydroxy group in a similar glucan chain.. It functions in the pathway glycan biosynthesis; glycogen biosynthesis. Functionally, catalyzes the formation of the alpha-1,6-glucosidic linkages in glycogen by scission of a 1,4-alpha-linked oligosaccharide from growing alpha-1,4-glucan chains and the subsequent attachment of the oligosaccharide to the alpha-1,6 position. This Shewanella sp. (strain W3-18-1) protein is 1,4-alpha-glucan branching enzyme GlgB.